The chain runs to 196 residues: uncharacterized protein (196 aa).

The region spanning 7-67 (RNTKEKILTA…AVIDNHVKIW (61 aa)) is the HTH tetR-type domain. Positions 30-49 (SINDILDETATGKGQFYYYF) form a DNA-binding region, H-T-H motif.

This is an uncharacterized protein from Lactococcus lactis subsp. lactis (Streptococcus lactis).